The primary structure comprises 143 residues: Ribosome maturation factor RimP (143 aa).

It belongs to the RimP family.

It localises to the cytoplasm. In terms of biological role, required for maturation of 30S ribosomal subunits. The polypeptide is Ribosome maturation factor RimP (Borrelia turicatae (strain 91E135)).